Here is a 220-residue protein sequence, read N- to C-terminus: pH-response regulator palI/RIM9 homolog 1 (220 aa).

Topologically, residues 1-5 (MSHFK) are cytoplasmic. The helical transmembrane segment at 6–26 (IVFLTSLSLALVFELFNTISV) threads the bilayer. Topologically, residues 27-89 (PITSHLFISE…NHAKYALSKL (63 aa)) are extracellular. The helical transmembrane segment at 90-110 (LLVHVLSFVCVLVFWLFAILI) threads the bilayer. The Cytoplasmic segment spans residues 111-121 (CIKWLNTSKSV). A helical membrane pass occupies residues 122–142 (LLFAVGWSMVTFMVSLLGFLI). Residues 143–155 (DVLMFASHVTWSS) are Extracellular-facing. The helical transmembrane segment at 156 to 176 (WLMLVSAFFVALSGILLCLMI) threads the bilayer. Over 177-220 (RDLSYRRFVKLQGEVDVCVPMTEPRDPDELNEIWKKKTSKREIL) the chain is Cytoplasmic.

This sequence belongs to the palI/RIM9 family.

It localises to the cell membrane. Required for the proteolytic cleavage of the transcription factor RIM101 in response to alkaline ambient pH. The polypeptide is pH-response regulator palI/RIM9 homolog 1 (Kluyveromyces lactis (strain ATCC 8585 / CBS 2359 / DSM 70799 / NBRC 1267 / NRRL Y-1140 / WM37) (Yeast)).